The following is a 207-amino-acid chain: uncharacterized protein (207 aa).

This is an uncharacterized protein from Frog virus 3 (isolate Goorha) (FV-3).